The chain runs to 227 residues: Cleavage and polyadenylation specificity factor subunit 5 (227 aa).

Residues 76-201 form the Nudix hydrolase domain; sequence MRRTVEGVLI…KLVAAPLFEL (126 aa). The segment at 102–104 is interaction with RNA; sequence TFF. Residues 109–130 carry the Nudix box motif; the sequence is GELNPGEDEVEGLKRLMTEILG.

This sequence belongs to the Nudix hydrolase family. CPSF5 subfamily. Homodimer (via N- and C-terminus); binds RNA as homodimer. Component of the cleavage factor Im (CFIm) complex.

It is found in the nucleus. The protein localises to the cytoplasm. Functionally, component of the cleavage factor Im (CFIm) complex that functions as an activator of the pre-mRNA 3'-end cleavage and polyadenylation processing required for the maturation of pre-mRNA into functional mRNAs. CFIm contributes to the recruitment of multiprotein complexes on specific sequences on the pre-mRNA 3'-end, so called cleavage and polyadenylation signals (pA signals). Most pre-mRNAs contain multiple pA signals, resulting in alternative cleavage and polyadenylation (APA) producing mRNAs with variable 3'-end formation. The CFIm complex acts as a key regulator of cleavage and polyadenylation site choice during APA through its binding to 5'-UGUA-3' elements localized in the 3'-untranslated region (UTR) for a huge number of pre-mRNAs. Binds to 5'-UGUA-3' elements localized upstream of pA signals that act as enhancers of pre-mRNA 3'-end processing. The homodimer mediates simultaneous sequence-specific recognition of two 5'-UGUA-3' elements within the pre-mRNA. Plays a role in somatic cell fate transitions and pluripotency by regulating widespread changes in gene expression through an APA-dependent function. Binds to chromatin. Binds to, but does not hydrolyze mono- and di-adenosine nucleotides. The sequence is that of Cleavage and polyadenylation specificity factor subunit 5 from Xenopus laevis (African clawed frog).